We begin with the raw amino-acid sequence, 652 residues long: Zinc finger protein 432 (652 aa).

Positions 8-79 constitute a KRAB domain; sequence LTLEDVTVEF…EDERHSRICP (72 aa). 3'-nitrotyrosine is present on Y41. 2 positions are modified to ADP-ribosylserine: S139 and S164. 16 consecutive C2H2-type zinc fingers follow at residues 205-227, 233-255, 261-283, 289-311, 317-339, 345-367, 373-395, 401-423, 429-451, 457-479, 485-507, 513-535, 541-563, 567-591, 597-619, and 625-647; these read HVCS…ERVH, YGCT…QRIH, FICS…QRTH, YICN…QRNH, YICS…QRTH, YICS…QRNH, YICN…QRTH, YLCS…QRTH, YTCS…QRTH, YRCS…QRTH, FMCS…QQIH, KSCI…KQVH, YGCN…QRTH, and FVCS…QRTH. S246 is modified (ADP-ribosylserine). ADP-ribosylserine is present on S330. ADP-ribosylserine is present on S414.

Belongs to the krueppel C2H2-type zinc-finger protein family. In terms of assembly, interacts with PARP1 and several chromatin remodeling proteins; the interaction with PARP1 reshapes ZNF432 interacting proteins. Interacts with TRIM28; the interaction is independent of PARP1.

The protein localises to the nucleus. Functionally, homologous recombination repressor that functions as a poly(ADP-ribose) (PAR) reader regulating DNA damage response and PARP inhibition. Once recruited to DNA lesions via DNA-, in a PAR-dependent mechanism, stimulates PARP1 activity. Binds preferentially ssDNA and inhibits EXO1-mediated resection, probably through a PAR-independent DNA-binding mechanism. The protein is Zinc finger protein 432 of Homo sapiens (Human).